Here is a 72-residue protein sequence, read N- to C-terminus: MANASGSMSAVRETMDVLLEISRLLNTGLDMETLSICVRLCEQGINPEALSSVIKELRRASETLKASESTAS.

It belongs to the MOZART1 family. As to quaternary structure, part of the gamma-tubulin complex.

The protein localises to the cytoplasm. Its subcellular location is the cytoskeleton. It is found in the microtubule organizing center. It localises to the centrosome. The protein resides in the spindle. In terms of biological role, required for gamma-tubulin complex recruitment to the centrosome. The protein is Mitotic-spindle organizing protein 1 (mzt1) of Xenopus tropicalis (Western clawed frog).